Reading from the N-terminus, the 734-residue chain is Ribosomal RNA large subunit methyltransferase K/L (734 aa).

A THUMP domain is found at 49–167; that stretch reads HAYRICMWSR…KTEHTYCLDL (119 aa).

The protein belongs to the methyltransferase superfamily. RlmKL family.

Its subcellular location is the cytoplasm. The catalysed reaction is guanosine(2445) in 23S rRNA + S-adenosyl-L-methionine = N(2)-methylguanosine(2445) in 23S rRNA + S-adenosyl-L-homocysteine + H(+). It carries out the reaction guanosine(2069) in 23S rRNA + S-adenosyl-L-methionine = N(2)-methylguanosine(2069) in 23S rRNA + S-adenosyl-L-homocysteine + H(+). Specifically methylates the guanine in position 2445 (m2G2445) and the guanine in position 2069 (m7G2069) of 23S rRNA. This Acinetobacter baumannii (strain ACICU) protein is Ribosomal RNA large subunit methyltransferase K/L.